The following is an 89-amino-acid chain: Small ribosomal subunit protein uS15 (89 aa).

The protein belongs to the universal ribosomal protein uS15 family. Part of the 30S ribosomal subunit. Forms a bridge to the 50S subunit in the 70S ribosome, contacting the 23S rRNA.

In terms of biological role, one of the primary rRNA binding proteins, it binds directly to 16S rRNA where it helps nucleate assembly of the platform of the 30S subunit by binding and bridging several RNA helices of the 16S rRNA. Functionally, forms an intersubunit bridge (bridge B4) with the 23S rRNA of the 50S subunit in the ribosome. This chain is Small ribosomal subunit protein uS15, found in Cupriavidus metallidurans (strain ATCC 43123 / DSM 2839 / NBRC 102507 / CH34) (Ralstonia metallidurans).